A 313-amino-acid polypeptide reads, in one-letter code: Caffeic acid 3-O-methyltransferase (313 aa).

Residue 112 to 118 (IDQDRVF) coordinates substrate. The segment at 144-162 (AFDYPGTDPRFNKIFNRAM) is substrate binding. The S-adenosyl-L-methionine site is built by glycine 190, aspartate 213, aspartate 233, methionine 234, and lysine 247. Histidine 251 serves as the catalytic Proton acceptor.

This sequence belongs to the class I-like SAM-binding methyltransferase superfamily. Cation-independent O-methyltransferase family. COMT subfamily. As to quaternary structure, homodimer.

It carries out the reaction (E)-caffeate + S-adenosyl-L-methionine = (E)-ferulate + S-adenosyl-L-homocysteine + H(+). It functions in the pathway aromatic compound metabolism; phenylpropanoid biosynthesis. Its function is as follows. Catalyzes the conversion of caffeic acid to ferulic acid and of 5-hydroxyferulic acid to sinapic acid. The resulting products may subsequently be converted to the corresponding alcohols that are incorporated into lignins. In Eucalyptus globulus (Tasmanian blue gum), this protein is Caffeic acid 3-O-methyltransferase (COMT1).